A 475-amino-acid polypeptide reads, in one-letter code: Ribulose bisphosphate carboxylase large chain (475 aa).

A propeptide spanning residues 1-2 (MS) is cleaved from the precursor. An N-acetylproline modification is found at Pro-3. Position 14 is an N6,N6,N6-trimethyllysine (Lys-14). Substrate is bound by residues Asn-123 and Thr-173. Catalysis depends on Lys-175, which acts as the Proton acceptor. Residue Lys-177 coordinates substrate. Mg(2+) contacts are provided by Lys-201, Asp-203, and Glu-204. Lys-201 is modified (N6-carboxylysine). His-294 serves as the catalytic Proton acceptor. Residues Arg-295, His-327, and Ser-379 each coordinate substrate.

Belongs to the RuBisCO large chain family. Type I subfamily. Heterohexadecamer of 8 large chains and 8 small chains; disulfide-linked. The disulfide link is formed within the large subunit homodimers. It depends on Mg(2+) as a cofactor. In terms of processing, the disulfide bond which can form in the large chain dimeric partners within the hexadecamer appears to be associated with oxidative stress and protein turnover.

The protein resides in the plastid. It localises to the chloroplast. It catalyses the reaction 2 (2R)-3-phosphoglycerate + 2 H(+) = D-ribulose 1,5-bisphosphate + CO2 + H2O. The enzyme catalyses D-ribulose 1,5-bisphosphate + O2 = 2-phosphoglycolate + (2R)-3-phosphoglycerate + 2 H(+). Its function is as follows. RuBisCO catalyzes two reactions: the carboxylation of D-ribulose 1,5-bisphosphate, the primary event in carbon dioxide fixation, as well as the oxidative fragmentation of the pentose substrate in the photorespiration process. Both reactions occur simultaneously and in competition at the same active site. This Staurastrum punctulatum (Green alga) protein is Ribulose bisphosphate carboxylase large chain.